A 1102-amino-acid polypeptide reads, in one-letter code: Carbamoyl phosphate synthase large chain (1102 aa).

A carboxyphosphate synthetic domain region spans residues 1-402 (MPKRTDLKSV…ALQKALRSLE (402 aa)). ATP-binding residues include arginine 129, arginine 169, glycine 175, glycine 176, glutamate 208, isoleucine 210, glutamate 215, glycine 241, valine 242, histidine 243, glutamine 285, and glutamate 299. The ATP-grasp 1 domain occupies 133–328 (KGVVERCGAE…IAKIATKLSL (196 aa)). The Mg(2+) site is built by glutamine 285, glutamate 299, and asparagine 301. 3 residues coordinate Mn(2+): glutamine 285, glutamate 299, and asparagine 301. The interval 403-546 (QKGSQLDFSS…YHYSSYDEED (144 aa)) is oligomerization domain. The tract at residues 547 to 950 (EVGLHAKPSV…AFAKSQAAAN (404 aa)) is carbamoyl phosphate synthetic domain. An ATP-grasp 2 domain is found at 677–868 (ARVLDEAGLT…MAKAAALIGT (192 aa)). ATP-binding residues include arginine 713, arginine 752, leucine 754, glutamate 759, glycine 784, isoleucine 785, histidine 786, serine 787, glutamine 827, and glutamate 839. Residues glutamine 827, glutamate 839, and asparagine 841 each coordinate Mg(2+). 3 residues coordinate Mn(2+): glutamine 827, glutamate 839, and asparagine 841. Residues 951 to 1096 (NALPTEGKIF…QEHAANLSAA (146 aa)) enclose the MGS-like domain. The allosteric domain stretch occupies residues 951-1102 (NALPTEGKIF…LSAAMEAANA (152 aa)).

This sequence belongs to the CarB family. Composed of two chains; the small (or glutamine) chain promotes the hydrolysis of glutamine to ammonia, which is used by the large (or ammonia) chain to synthesize carbamoyl phosphate. Tetramer of heterodimers (alpha,beta)4. Mg(2+) serves as cofactor. Mn(2+) is required as a cofactor.

The catalysed reaction is hydrogencarbonate + L-glutamine + 2 ATP + H2O = carbamoyl phosphate + L-glutamate + 2 ADP + phosphate + 2 H(+). It carries out the reaction hydrogencarbonate + NH4(+) + 2 ATP = carbamoyl phosphate + 2 ADP + phosphate + 2 H(+). It functions in the pathway amino-acid biosynthesis; L-arginine biosynthesis; carbamoyl phosphate from bicarbonate: step 1/1. Its pathway is pyrimidine metabolism; UMP biosynthesis via de novo pathway; (S)-dihydroorotate from bicarbonate: step 1/3. Functionally, large subunit of the glutamine-dependent carbamoyl phosphate synthetase (CPSase). CPSase catalyzes the formation of carbamoyl phosphate from the ammonia moiety of glutamine, carbonate, and phosphate donated by ATP, constituting the first step of 2 biosynthetic pathways, one leading to arginine and/or urea and the other to pyrimidine nucleotides. The large subunit (synthetase) binds the substrates ammonia (free or transferred from glutamine from the small subunit), hydrogencarbonate and ATP and carries out an ATP-coupled ligase reaction, activating hydrogencarbonate by forming carboxy phosphate which reacts with ammonia to form carbamoyl phosphate. This is Carbamoyl phosphate synthase large chain from Paenarthrobacter aurescens (strain TC1).